A 64-amino-acid chain; its full sequence is Large ribosomal subunit protein uL29 (64 aa).

It belongs to the universal ribosomal protein uL29 family.

The protein is Large ribosomal subunit protein uL29 of Nitrosomonas europaea (strain ATCC 19718 / CIP 103999 / KCTC 2705 / NBRC 14298).